The sequence spans 639 residues: Extracellular metalloproteinase mep (639 aa).

Residues 1-16 (MHMLSFIGALALPVFV) form the signal peptide. Positions 17 to 245 (CAQSCEPASL…IHGVVDYISE (229 aa)) are excised as a propeptide. N287, N320, N336, and N368 each carry an N-linked (GlcNAc...) asparagine glycan. Residue H429 coordinates Zn(2+). Residue E430 is part of the active site. H433 contributes to the Zn(2+) binding site. An N-linked (GlcNAc...) asparagine glycan is attached at N509.

This sequence belongs to the peptidase M36 family. Requires Zn(2+) as cofactor.

It is found in the secreted. In terms of biological role, secreted metalloproteinase that allows assimilation of proteinaceous substrates. This Aspergillus flavus (strain ATCC 200026 / FGSC A1120 / IAM 13836 / NRRL 3357 / JCM 12722 / SRRC 167) protein is Extracellular metalloproteinase mep (mep).